The following is a 599-amino-acid chain: Elongation factor 4 (599 aa).

Positions Asn5–Lys187 constitute a tr-type G domain. GTP contacts are provided by residues Asp17–Thr22 and Asn134–Asp137.

Belongs to the TRAFAC class translation factor GTPase superfamily. Classic translation factor GTPase family. LepA subfamily.

Its subcellular location is the cell inner membrane. It carries out the reaction GTP + H2O = GDP + phosphate + H(+). Required for accurate and efficient protein synthesis under certain stress conditions. May act as a fidelity factor of the translation reaction, by catalyzing a one-codon backward translocation of tRNAs on improperly translocated ribosomes. Back-translocation proceeds from a post-translocation (POST) complex to a pre-translocation (PRE) complex, thus giving elongation factor G a second chance to translocate the tRNAs correctly. Binds to ribosomes in a GTP-dependent manner. This chain is Elongation factor 4, found in Jannaschia sp. (strain CCS1).